A 440-amino-acid polypeptide reads, in one-letter code: APO protein 2, chloroplastic (440 aa).

The N-terminal 62 residues, 1–62 (MSITYSAISF…SLQLNSRVVL (62 aa)), are a transit peptide targeting the chloroplast. Over residues 106-115 (ARERVKNNKD) the composition is skewed to basic and acidic residues. The interval 106 to 126 (ARERVKNNKDKPKRPLPPPKN) is disordered. APO domains follow at residues 162–247 (ACGW…EIPE) and 332–417 (VCGY…VVPE).

Belongs to the APO family.

Its subcellular location is the plastid. The protein localises to the chloroplast. Functionally, may be involved in the stable assembly of several 4Fe-4S cluster-containing complexes of chloroplasts. The protein is APO protein 2, chloroplastic (APO2) of Arabidopsis thaliana (Mouse-ear cress).